Consider the following 141-residue polypeptide: ATP synthase epsilon chain (141 aa).

This sequence belongs to the ATPase epsilon chain family. In terms of assembly, F-type ATPases have 2 components, CF(1) - the catalytic core - and CF(0) - the membrane proton channel. CF(1) has five subunits: alpha(3), beta(3), gamma(1), delta(1), epsilon(1). CF(0) has three main subunits: a, b and c.

Its subcellular location is the cell inner membrane. Its function is as follows. Produces ATP from ADP in the presence of a proton gradient across the membrane. The polypeptide is ATP synthase epsilon chain (Aromatoleum aromaticum (strain DSM 19018 / LMG 30748 / EbN1) (Azoarcus sp. (strain EbN1))).